The sequence spans 91 residues: RNA-binding protein Hfq (91 aa).

The region spanning 9–68 is the Sm domain; the sequence is DPYLNALRRERIPVSIYLVNGIKLQGQIESFDQFVILLKNTVNQMVYKHAISTVVPARSV. Residues 69–91 form a disordered region; sequence SHHNNNHHTAPTEAVENVETQAE.

It belongs to the Hfq family. Homohexamer.

RNA chaperone that binds small regulatory RNA (sRNAs) and mRNAs to facilitate mRNA translational regulation in response to envelope stress, environmental stress and changes in metabolite concentrations. Also binds with high specificity to tRNAs. The sequence is that of RNA-binding protein Hfq from Haemophilus influenzae (strain ATCC 51907 / DSM 11121 / KW20 / Rd).